We begin with the raw amino-acid sequence, 859 residues long: Cleavage factor two protein 2 (859 aa).

Residues 560–611 form a disordered region; the sequence is PDDSDNVNQNSRKRPLKDGAKTTSPVNEEDNKNEEEDGYNMSDPISKRSKHR. A compositionally biased stretch (acidic residues) spans 586-597; sequence NEEDNKNEEEDG.

As to quaternary structure, component of the cleavage and polyadenylation factor (CPF) complex, which is composed of at least PTI1, SYC1, SSU72, GLC7, MPE1, REF2, PFS2, PTA1, YSH1/BRR5, SWD2, CFT2/YDH1, YTH1, CFT1/YHH1, FIP1 and PAP1. Interacts with the CTD domain of RPB1/RNA polymerase II; the interaction is enhanced upon phosphorylation of the RPB1 CTD domain. Interacts with PCF11.

Its subcellular location is the nucleus. In terms of biological role, RNA-binding component of the cleavage and polyadenylation factor (CPF) complex, which plays a key role in polyadenylation-dependent pre-mRNA 3'-end formation and cooperates with cleavage factors including the CFIA complex and NAB4/CFIB. May be involved in poly(A)-site recognition. May be involved in the association of the CPF, CPFIA and RNA polymerase II complexes. The chain is Cleavage factor two protein 2 (CFT2) from Saccharomyces cerevisiae (strain ATCC 204508 / S288c) (Baker's yeast).